The following is a 305-amino-acid chain: 2-oxoacid:ferredoxin oxidoreductase subunit beta (305 aa).

[4Fe-4S] cluster is bound by residues Cys-12, Cys-15, and Cys-46. Residues 44 to 47 (IGCS) and His-65 contribute to the thiamine diphosphate site. Asp-90 contributes to the Mg(2+) binding site. 91–92 (GD) provides a ligand contact to thiamine diphosphate. Mg(2+) is bound by residues Asn-118 and Val-120. 122–123 (GL) provides a ligand contact to thiamine diphosphate. Cys-197 provides a ligand contact to [4Fe-4S] cluster.

In terms of assembly, heterodimer composed of an alpha and a beta subunit. The cofactor is [4Fe-4S] cluster. Requires thiamine diphosphate as cofactor. Mg(2+) is required as a cofactor.

The catalysed reaction is a 2-oxocarboxylate + 2 oxidized [2Fe-2S]-[ferredoxin] + CoA = an acyl-CoA + 2 reduced [2Fe-2S]-[ferredoxin] + CO2 + H(+). Functionally, catalyzes the coenzyme A-dependent oxidative decarboxylation of different 2-oxoacids such as 2-oxoglutarate, pyruvate and 2-oxobutyrate to form their CoA derivatives. In Saccharolobus solfataricus (Sulfolobus solfataricus), this protein is 2-oxoacid:ferredoxin oxidoreductase subunit beta.